A 507-amino-acid chain; its full sequence is MFFSNQYIKQRIQKGEELRELGRNPYDNQLMRTLTHAQFLQKFEALKSLESEEKRDESAKESIAGRIKFLRHMGKAAFAKIEDESGILQIYFSQNELGEDFKMLKKLAEVGDIVAVSGFPFVTKTGELSLHALEMKILTKAIVPLPEKYHGLVDVELRYRQRYLDLIMNPEVKETFKLRSQVVSSVRRFFEERGFLEVETPMMHPIPGGANAKPFITHHNALGVDRYLRIAPELYLKRLVVGGFEAVFEINRNFRNEGMDHSHNPEFTMIEFYWAYKTYHELMSLTEELFGYLFERLGLPKILPHGEEMIDFSLPFRRIPYKKALHEIGGVPLEVIEEKEKLRAYLIEKGVRLEGEMGIGKLQAEAFDAFVEEKLINPTFITEFPIEISPLARRSDENPQIADRFELFIGKKEISNGFSELNDPLDQLERFKAQVAAKNAGDEEAQHMDEDYVWALGHGLPPTAGEGIGIDRLVMLLTNNRSIKDVILFPALKVQKSDYTILKEEEA.

Residues glutamate 406 and glutamate 413 each contribute to the Mg(2+) site.

The protein belongs to the class-II aminoacyl-tRNA synthetase family. In terms of assembly, homodimer. The cofactor is Mg(2+).

It is found in the cytoplasm. The catalysed reaction is tRNA(Lys) + L-lysine + ATP = L-lysyl-tRNA(Lys) + AMP + diphosphate. The protein is Lysine--tRNA ligase of Wolinella succinogenes (strain ATCC 29543 / DSM 1740 / CCUG 13145 / JCM 31913 / LMG 7466 / NCTC 11488 / FDC 602W) (Vibrio succinogenes).